A 337-amino-acid chain; its full sequence is MTRHHQPRKGSVAFSPRKRVARETPRVSTWPELDEAGLLAFAGYKVGMTHVTALDSRKGSPTENMELSVPVTILEAPPLVVLGIRAYTKTTYGLKTLTDVIANDNLDDELSRKISVPKFDDIEAKIEELRNKIDDIDEIRVLIHTKPKLTSVPKKKPEVLEFGLGGKSVEDKLEYAISILGKEITPQDVFQEGEYTDAIATTKGKGVQGPVKRFGVRIQYGKAARSGIERHVGSIGPWTPNRTMWTVAMQGQMGYHKRTEYNKKLLKIGDESEVDLINPDGGFVKYGFVKNNYILVKGSLPGPSKRLVVLRKGVRNASKQVTAPEISYISTTSKQGV.

Residues 1 to 26 (MTRHHQPRKGSVAFSPRKRVARETPR) form a disordered region.

The protein belongs to the universal ribosomal protein uL3 family. Part of the 50S ribosomal subunit. Forms a cluster with proteins L14 and L24e.

Its function is as follows. One of the primary rRNA binding proteins, it binds directly near the 3'-end of the 23S rRNA, where it nucleates assembly of the 50S subunit. This chain is Large ribosomal subunit protein uL3, found in Methanosphaera stadtmanae (strain ATCC 43021 / DSM 3091 / JCM 11832 / MCB-3).